A 428-amino-acid chain; its full sequence is Serine--tRNA ligase (428 aa).

231–233 (TAE) lines the L-serine pocket. Residue 262-264 (RSE) coordinates ATP. Glu-285 provides a ligand contact to L-serine. 349–352 (EISS) lines the ATP pocket. Ser-385 lines the L-serine pocket.

The protein belongs to the class-II aminoacyl-tRNA synthetase family. Type-1 seryl-tRNA synthetase subfamily. In terms of assembly, homodimer. The tRNA molecule binds across the dimer.

Its subcellular location is the cytoplasm. The catalysed reaction is tRNA(Ser) + L-serine + ATP = L-seryl-tRNA(Ser) + AMP + diphosphate + H(+). It catalyses the reaction tRNA(Sec) + L-serine + ATP = L-seryl-tRNA(Sec) + AMP + diphosphate + H(+). The protein operates within aminoacyl-tRNA biosynthesis; selenocysteinyl-tRNA(Sec) biosynthesis; L-seryl-tRNA(Sec) from L-serine and tRNA(Sec): step 1/1. Catalyzes the attachment of serine to tRNA(Ser). Is also able to aminoacylate tRNA(Sec) with serine, to form the misacylated tRNA L-seryl-tRNA(Sec), which will be further converted into selenocysteinyl-tRNA(Sec). The chain is Serine--tRNA ligase from Cellvibrio japonicus (strain Ueda107) (Pseudomonas fluorescens subsp. cellulosa).